The sequence spans 110 residues: Defensin-like protein 296 (110 aa).

The N-terminal stretch at 1–28 is a signal peptide; it reads MASKITIFFVLALVVVCTMMVCIPTATA. 6 cysteine pairs are disulfide-bonded: C34/C52, C40/C57, C45/C59, C81/C102, C87/C107, and C95/C109.

Belongs to the DEFL family.

It localises to the secreted. The chain is Defensin-like protein 296 from Arabidopsis thaliana (Mouse-ear cress).